Reading from the N-terminus, the 395-residue chain is Protein PELOTA 2 (395 aa).

This sequence belongs to the eukaryotic release factor 1 family. Pelota subfamily. A divalent metal cation is required as a cofactor.

It localises to the cytoplasm. The protein localises to the nucleus. Functionally, component of the Pelota-HBS1L complex, a complex that recognizes stalled ribosomes and triggers the No-Go Decay (NGD) pathway. In the Pelota-HBS1L complex, pelo recognizes ribosomes stalled at the 3' end of an mRNA and engages stalled ribosomes by destabilizing mRNA in the mRNA channel. Following ribosome-binding, the Pelota-HBS1L complex promotes the disassembly of stalled ribosomes, followed by degradation of damaged mRNAs as part of the NGD pathway. The protein is Protein PELOTA 2 (PEL2) of Arabidopsis thaliana (Mouse-ear cress).